The primary structure comprises 425 residues: 5'-deoxyadenosine deaminase (425 aa).

Zn(2+)-binding residues include histidine 62 and histidine 64. Substrate contacts are provided by glutamate 91 and histidine 183. Histidine 210 is a binding site for Zn(2+). Substrate-binding residues include glutamate 213 and aspartate 298. Position 298 (aspartate 298) interacts with Zn(2+).

It belongs to the metallo-dependent hydrolases superfamily. MTA/SAH deaminase family. In terms of assembly, homotetramer. It depends on Zn(2+) as a cofactor.

The catalysed reaction is 5'-deoxyadenosine + H2O + H(+) = 5'-deoxyinosine + NH4(+). It catalyses the reaction S-adenosyl-L-homocysteine + H2O + H(+) = S-inosyl-L-homocysteine + NH4(+). The enzyme catalyses S-methyl-5'-thioadenosine + H2O + H(+) = S-methyl-5'-thioinosine + NH4(+). It carries out the reaction adenosine + H2O + H(+) = inosine + NH4(+). Its pathway is amino-acid biosynthesis; S-adenosyl-L-methionine biosynthesis. Functionally, catalyzes the deamination of three SAM-derived enzymatic products, namely 5'-deoxyadenosine, S-adenosyl-L-homocysteine, and 5'-methylthioadenosine, to produce the inosine analogs. Can also deaminate adenosine. The preferred substrate for this enzyme is 5'-deoxyadenosine, but all these substrates are efficiently deaminated. Likely functions in a S-adenosyl-L-methionine (SAM) recycling pathway from S-adenosyl-L-homocysteine (SAH) produced from SAM-dependent methylation reactions. May also be involved in the recycling of 5'-deoxyadenosine, whereupon the 5'-deoxyribose moiety of 5'-deoxyinosine is further metabolized to deoxyhexoses used for the biosynthesis of aromatic amino acids in methanogens. In Methanosphaera stadtmanae (strain ATCC 43021 / DSM 3091 / JCM 11832 / MCB-3), this protein is 5'-deoxyadenosine deaminase.